The chain runs to 193 residues: Rho-related GTP-binding protein RhoA-D (193 aa).

GTP-binding positions include 12–19 (GDGACGKT), 30–37 (FPEVYVPT), 59–63 (DTAGQ), 117–120 (NKKD), and 160–162 (SAK). (Microbial infection) O-linked (GlcNAc) tyrosine; by Yersinia Afp18 glycosylation is present at Tyr34. Position 190 is a cysteine methyl ester (Cys190). Cys190 is lipidated: S-geranylgeranyl cysteine. Residues 191-193 (LLL) constitute a propeptide, removed in mature form.

The protein belongs to the small GTPase superfamily. Rho family. In terms of processing, (Microbial infection) Glycosylated at Tyr-34 by Yersinia ruckeri toxin Afp18. Mono-O-GlcNAcylation by Afp18 inhibits RhoA activation by guanine nucleotide exchange factors and blocks RhoA signaling.

It is found in the cell membrane. In terms of biological role, regulates a signal transduction pathway linking plasma membrane receptors to the assembly of focal adhesions and actin stress fibers. This chain is Rho-related GTP-binding protein RhoA-D, found in Danio rerio (Zebrafish).